We begin with the raw amino-acid sequence, 287 residues long: Proteasome subunit alpha (287 aa).

A disordered region spans residues 241–287; it reads GVVAGEEPHTAAHAPSVPQPGAPAGLGDPGAPDTGGTAGSGGEAPTT. Residues 262–275 are compositionally biased toward low complexity; it reads APAGLGDPGAPDTG. Residues 276–287 show a composition bias toward gly residues; that stretch reads GTAGSGGEAPTT.

It belongs to the peptidase T1A family. In terms of assembly, the 20S proteasome core is composed of 14 alpha and 14 beta subunits that assemble into four stacked heptameric rings, resulting in a barrel-shaped structure. The two inner rings, each composed of seven catalytic beta subunits, are sandwiched by two outer rings, each composed of seven alpha subunits. The catalytic chamber with the active sites is on the inside of the barrel. Has a gated structure, the ends of the cylinder being occluded by the N-termini of the alpha-subunits. Is capped by the proteasome-associated ATPase, ARC.

It is found in the cytoplasm. It functions in the pathway protein degradation; proteasomal Pup-dependent pathway. With respect to regulation, the formation of the proteasomal ATPase ARC-20S proteasome complex, likely via the docking of the C-termini of ARC into the intersubunit pockets in the alpha-rings, may trigger opening of the gate for substrate entry. Interconversion between the open-gate and close-gate conformations leads to a dynamic regulation of the 20S proteasome proteolysis activity. Its function is as follows. Component of the proteasome core, a large protease complex with broad specificity involved in protein degradation. The sequence is that of Proteasome subunit alpha from Geodermatophilus obscurus (strain ATCC 25078 / DSM 43160 / JCM 3152 / CCUG 61914 / KCC A-0152 / KCTC 9177 / NBRC 13315 / NRRL B-3577 / G-20).